We begin with the raw amino-acid sequence, 1505 residues long: MFNSYQATGMGYNPNQQQQQPPPPQQQQQLYSQPTAFGQPNLYGSNMQQGYIQTQPTGFAGAPTVIENNELKIPSIRLSFITAEDQKKFEHLFRSAVPRGEQSMSGDTASNILLRSGLTPVVLAEIWTLSDIDKTGALLFPEFALSLHLCNMAKRGEPLPGVLPQKWHNEVQSFIDAINFSIPDDPNKILANTPFAKKDDWLSNVGQPQSNWMAPQGTGYPQTSFLQNQATGFAQQPTGFGQQATGFGQQATGFGQQSSWLAPQATGFNNSAPPPSTSFGGTGTGIVAGAGAGASAAPTGGFVPLQPQQTAGLIQKPAGLQPQSTGFMAPQRTGGLAPQATGLAPQATGLQAQRTGGFGVPQQATGYQQSFNTGGLQANKTGPLQPNHTGYNFQQQQQQQQQATGLQRQPTGVLQQQPTGYLQQQPTGYLQSQPTGRPGEWGFVSMPTGGMPGLNSMQQVFQPNNTQTYQDLHKVMNDNSASNVTWAISKQEKQIYDRLFQAWDTGRNGYVDSNVALNVFTKSGLGRQDLEAIWTLADTDDVGKLNKNQFAVAMHLIYRRLNGLEIPLRLPPELIPPADKTLKDTMDSLKNSLKNGGAKQTRSKPMTKPDGSRFKNDDSDFGYVSSSRYKKKSEEEKQANARTSKDFGLSIDDMKKLIREKKILIDAMDVEDEDRQRTSDREVDALKSKIYELQKKLSGSSNNGGNSKEALLAKLERTGKRIPSLLQQLNQVNQEISEKSVELVKLQLKREDPSWDEAKVDVSGAGGKFDLKQKMAMLTGKGGSAMADSKYRDAVEKSKSDLKNQSDMVKDIESGIRSLEDDCSAKLRTTAKNAVGYEKWENGFGVSKAVADFVKELNKLKADAQPEFARSADNTTTARSSSAYAQQVPPAASRTFSAQETNASPGAVTSTGTGGSGSGSGSATYSTPEERAAYIKAEAAKRMASRLEKLGISRTKRAPKAAEKHDEIVSKPSPSREEPPRLSGEAAIANPVERAPSADKTPVNTAHAESHAQTTSSNRAPEAKPEQVSVPVESQRENFRENKWDEEKQYRPSQTNNNDNNNISSTHQSQEHIVKENAKNVESAPQAPTSNYSQQPPAFGGAFQSESSRATETEQAESKKESETTPVVPPAPAAASTEPAQPAQPAQASQASKPAQPAQPANSTEPASASASEQPAVRRHENNPFFKNKFQPVDTQKISMQRNFQRGTSNDNSWSDSEEEDSEDEAPNRAGAAQLANLLFGSMSSQPTGNAAFAKSAAQEPSKDEKSIGAENASGHESKMNAELSSSENTAAGVSQVNETPAQSSYEEPSLQEQSSYESNAVPAAPSLPESVPPPAPAPEAPSLPQSVPPPPPIPSEYSAPPAPSLPRDVPPAPEAPSLPQSIPPPPPVPSEYSAPPAPPAPPAPSLPQSIPPPPPVPSEYSAPPAPPAPPAPPAPPAPSLPSSIPPPPPAPPLSSNDSSLASAAAPPAGGAPNIGALLGQITGGKSLKKVETKVSSGATVGRVL.

A disordered region spans residues 1-30 (MFNSYQATGMGYNPNQQQQQPPPPQQQQQL). The EH 1 domain maps to 85–174 (DQKKFEHLFR…QKWHNEVQSF (90 aa)). The EF-hand 1 domain maps to 118–153 (LTPVVLAEIWTLSDIDKTGALLFPEFALSLHLCNMA). 2 stretches are compositionally biased toward polar residues: residues 364–393 (ATGY…GYNF) and 403–413 (ATGLQRQPTGV). 2 disordered regions span residues 364–416 (ATGY…VLQQ) and 422–441 (LQQQ…PGEW). In terms of domain architecture, EH 2 spans 492–581 (EKQIYDRLFQ…PELIPPADKT (90 aa)). The EF-hand 2 domain occupies 525-560 (LGRQDLEAIWTLADTDDVGKLNKNQFAVAMHLIYRR). A compositionally biased stretch (polar residues) spans 588–604 (SLKNSLKNGGAKQTRSK). The tract at residues 588–620 (SLKNSLKNGGAKQTRSKPMTKPDGSRFKNDDSD) is disordered. Residues 677-752 (RTSDREVDAL…LVKLQLKRED (76 aa)) adopt a coiled-coil conformation. Disordered stretches follow at residues 867–927 (EFAR…TYST) and 948–1505 (EKLG…GRVL). The segment covering 872–885 (ADNTTTARSSSAYA) has biased composition (polar residues). 3 stretches are compositionally biased toward basic and acidic residues: residues 960 to 980 (KAAE…EEPP), 1034 to 1050 (SQRE…EKQY), and 1069 to 1079 (SQEHIVKENAK). The segment covering 1086–1096 (QAPTSNYSQQP) has biased composition (polar residues). Over residues 1109–1123 (RATETEQAESKKESE) the composition is skewed to basic and acidic residues. The segment covering 1133–1175 (AAASTEPAQPAQPAQASQASKPAQPAQPANSTEPASASASEQP) has biased composition (low complexity). A compositionally biased stretch (polar residues) spans 1193–1208 (VDTQKISMQRNFQRGT). The span at 1216–1225 (DSEEEDSEDE) shows a compositional bias: acidic residues. A compositionally biased stretch (basic and acidic residues) spans 1261–1280 (PSKDEKSIGAENASGHESKM). Residues 1283–1319 (ELSSSENTAAGVSQVNETPAQSSYEEPSLQEQSSYES) are compositionally biased toward polar residues. A compositionally biased stretch (low complexity) spans 1321–1330 (AVPAAPSLPE). Positions 1331–1453 (SVPPPAPAPE…SIPPPPPAPP (123 aa)) are enriched in pro residues. Residues 1454 to 1472 (LSSNDSSLASAAAPPAGGA) are compositionally biased toward low complexity. Positions 1474–1491 (NIGALLGQITGGKSLKKV) constitute a WH2 domain.

It belongs to the PAN1 family. As to quaternary structure, component of the PAN1 actin cytoskeleton-regulatory complex.

The protein resides in the cell membrane. Its subcellular location is the endosome membrane. It localises to the cytoplasm. It is found in the cytoskeleton. The protein localises to the actin patch. Its function is as follows. Component of the PAN1 actin cytoskeleton-regulatory complex required for the internalization of endosomes during actin-coupled endocytosis. The complex links the site of endocytosis to the cell membrane-associated actin cytoskeleton. Mediates uptake of external molecules and vacuolar degradation of plasma membrane proteins. Plays a role in the proper organization of the cell membrane-associated actin cytoskeleton and promotes its destabilization. This chain is Actin cytoskeleton-regulatory complex protein PAN1 (PAN1), found in Lodderomyces elongisporus (strain ATCC 11503 / CBS 2605 / JCM 1781 / NBRC 1676 / NRRL YB-4239) (Yeast).